Here is a 300-residue protein sequence, read N- to C-terminus: Acetylglutamate kinase (300 aa).

Substrate is bound by residues 73 to 74 (GG), Arg95, and Asn197.

It belongs to the acetylglutamate kinase family. ArgB subfamily.

It localises to the cytoplasm. It carries out the reaction N-acetyl-L-glutamate + ATP = N-acetyl-L-glutamyl 5-phosphate + ADP. Its pathway is amino-acid biosynthesis; L-arginine biosynthesis; N(2)-acetyl-L-ornithine from L-glutamate: step 2/4. Its function is as follows. Catalyzes the ATP-dependent phosphorylation of N-acetyl-L-glutamate. The chain is Acetylglutamate kinase from Polynucleobacter asymbioticus (strain DSM 18221 / CIP 109841 / QLW-P1DMWA-1) (Polynucleobacter necessarius subsp. asymbioticus).